The following is a 267-amino-acid chain: tRNA-cytidine(32) 2-sulfurtransferase (267 aa).

Positions 37–42 match the PP-loop motif motif; the sequence is SGGKDS. The [4Fe-4S] cluster site is built by C112, C115, and C203.

Belongs to the TtcA family. In terms of assembly, homodimer. Requires Mg(2+) as cofactor. It depends on [4Fe-4S] cluster as a cofactor.

It is found in the cytoplasm. The enzyme catalyses cytidine(32) in tRNA + S-sulfanyl-L-cysteinyl-[cysteine desulfurase] + AH2 + ATP = 2-thiocytidine(32) in tRNA + L-cysteinyl-[cysteine desulfurase] + A + AMP + diphosphate + H(+). It participates in tRNA modification. Functionally, catalyzes the ATP-dependent 2-thiolation of cytidine in position 32 of tRNA, to form 2-thiocytidine (s(2)C32). The sulfur atoms are provided by the cysteine/cysteine desulfurase (IscS) system. In Dichelobacter nodosus (strain VCS1703A), this protein is tRNA-cytidine(32) 2-sulfurtransferase.